A 348-amino-acid chain; its full sequence is Phosphate acyltransferase (348 aa).

Belongs to the PlsX family. In terms of assembly, homodimer. Probably interacts with PlsY.

It localises to the cytoplasm. The catalysed reaction is a fatty acyl-[ACP] + phosphate = an acyl phosphate + holo-[ACP]. The protein operates within lipid metabolism; phospholipid metabolism. Catalyzes the reversible formation of acyl-phosphate (acyl-PO(4)) from acyl-[acyl-carrier-protein] (acyl-ACP). This enzyme utilizes acyl-ACP as fatty acyl donor, but not acyl-CoA. This Francisella tularensis subsp. tularensis (strain FSC 198) protein is Phosphate acyltransferase.